Reading from the N-terminus, the 450-residue chain is NAD-specific glutamate dehydrogenase (450 aa).

Positions 90, 111, and 114 each coordinate substrate. Lys126 (proton donor) is an active-site residue. Position 165 (Gly165) interacts with substrate. NAD(+) contacts are provided by Thr210 and Asn241. Ser381 serves as a coordination point for substrate.

Belongs to the Glu/Leu/Phe/Val dehydrogenases family. In terms of assembly, homohexamer.

It catalyses the reaction L-glutamate + NAD(+) + H2O = 2-oxoglutarate + NH4(+) + NADH + H(+). Its pathway is amino-acid degradation; L-glutamate degradation via hydroxyglutarate pathway; crotonoyl-CoA from L-glutamate: step 1/5. In Clostridium symbiosum (Bacteroides symbiosus), this protein is NAD-specific glutamate dehydrogenase (gdh).